A 396-amino-acid polypeptide reads, in one-letter code: F-box protein At2g21930 (396 aa).

Positions 19–65 (SGNSVQIPFDLIPEILKRLPVKTLARFLSVSKEYTSIIRNRDFMKSY) constitute an F-box domain.

This is F-box protein At2g21930 from Arabidopsis thaliana (Mouse-ear cress).